The following is a 500-amino-acid chain: Probable malate:quinone oxidoreductase (500 aa).

This sequence belongs to the MQO family. Requires FAD as cofactor.

It carries out the reaction (S)-malate + a quinone = a quinol + oxaloacetate. Its pathway is carbohydrate metabolism; tricarboxylic acid cycle; oxaloacetate from (S)-malate (quinone route): step 1/1. This Bacillus cereus (strain B4264) protein is Probable malate:quinone oxidoreductase.